The chain runs to 337 residues: Adenylosuccinate synthetase (337 aa).

GTP contacts are provided by residues 12-18 (GDEGKGK) and 42-44 (GHT). Catalysis depends on Asp13, which acts as the Proton acceptor. The Mg(2+) site is built by Asp13 and Gly42. Residues 13–16 (DEGK), 40–43 (NAGH), Thr124, Arg138, Gln176, Thr191, and Arg253 each bind IMP. The active-site Proton donor is the His43. Residue 249–255 (TVTGRRR) participates in substrate binding. Residues Arg255, 281–283 (GVD), and 321–323 (STG) contribute to the GTP site.

This sequence belongs to the adenylosuccinate synthetase family. As to quaternary structure, homodimer. Mg(2+) is required as a cofactor.

The protein localises to the cytoplasm. The enzyme catalyses IMP + L-aspartate + GTP = N(6)-(1,2-dicarboxyethyl)-AMP + GDP + phosphate + 2 H(+). The protein operates within purine metabolism; AMP biosynthesis via de novo pathway; AMP from IMP: step 1/2. Plays an important role in the de novo pathway of purine nucleotide biosynthesis. Catalyzes the first committed step in the biosynthesis of AMP from IMP. This chain is Adenylosuccinate synthetase, found in Archaeoglobus fulgidus (strain ATCC 49558 / DSM 4304 / JCM 9628 / NBRC 100126 / VC-16).